Reading from the N-terminus, the 602-residue chain is UvrABC system protein C (602 aa).

A GIY-YIG domain is found at 17–94; it reads TTSGCYKMYS…IKEHKPDYNI (78 aa). Residues 199 to 234 form the UVR domain; that stretch reads SKLLDEIEIKMKEVIKREDFESAIKLKETKRSLIEI.

It belongs to the UvrC family. As to quaternary structure, interacts with UvrB in an incision complex.

It is found in the cytoplasm. Functionally, the UvrABC repair system catalyzes the recognition and processing of DNA lesions. UvrC both incises the 5' and 3' sides of the lesion. The N-terminal half is responsible for the 3' incision and the C-terminal half is responsible for the 5' incision. This chain is UvrABC system protein C, found in Borrelia turicatae (strain 91E135).